The sequence spans 165 residues: MFLTVKLLLGRRCSLKVSGQESVAMLKKLVSERLHVPEEQQHLLFRGQLLADDKRLSDYRIGPNASISVVVRPLEKPAPEDTRLPQPLWHHLGQVLAKHFGPQDTEAMLQLLRREHEECLQRISLGDLEQLARYLLTKEPLAQPTGEREPEVLSPNKEEEKEAVQ.

Residues 1-76 (MFLTVKLLLG…ISVVVRPLEK (76 aa)) enclose the Ubiquitin-like domain. Residues 139 to 165 (EPLAQPTGEREPEVLSPNKEEEKEAVQ) are disordered. Residues 146-165 (GEREPEVLSPNKEEEKEAVQ) show a composition bias toward basic and acidic residues.

It localises to the cytoplasm. The chain is Ubiquitin-like protein 4B (UBL4B) from Bos taurus (Bovine).